The primary structure comprises 39 residues: Bacteriocin lactococcin-G subunit alpha (39 aa).

As to quaternary structure, bacteriocin activity requires interaction of alpha and beta peptides in a molar ratio of 7:1 or 8:1 respectively.

Functionally, kills Lactococci. The protein is Bacteriocin lactococcin-G subunit alpha of Lactococcus lactis subsp. lactis (Streptococcus lactis).